The primary structure comprises 407 residues: Phosphonoacetate hydrolase (407 aa).

Zn(2+) contacts are provided by Asp-25, Thr-64, Asp-202, His-206, Asp-241, His-242, and His-368. 2 residues coordinate substrate: Thr-64 and Asp-202. Residues His-242 and His-368 each contribute to the substrate site.

This sequence belongs to the alkaline phosphatase family. PhnA subfamily. As to quaternary structure, homodimer. Requires Zn(2+) as cofactor.

It catalyses the reaction phosphonoacetate + H2O = acetate + phosphate + H(+). Its function is as follows. Specifically hydrolyzes phosphonoacetate. Does not have activity on other organophosphonates or acetates. The sequence is that of Phosphonoacetate hydrolase from Pseudomonas cedrina.